Here is a 278-residue protein sequence, read N- to C-terminus: tRNA pseudouridine synthase A (278 aa).

The active-site Nucleophile is Asp61. A substrate-binding site is contributed by Tyr119.

The protein belongs to the tRNA pseudouridine synthase TruA family. As to quaternary structure, homodimer.

The enzyme catalyses uridine(38/39/40) in tRNA = pseudouridine(38/39/40) in tRNA. In terms of biological role, formation of pseudouridine at positions 38, 39 and 40 in the anticodon stem and loop of transfer RNAs. The polypeptide is tRNA pseudouridine synthase A (Oleidesulfovibrio alaskensis (strain ATCC BAA-1058 / DSM 17464 / G20) (Desulfovibrio alaskensis)).